The sequence spans 1405 residues: DNA-directed RNA polymerase III subunit rpc1 (1405 aa).

Zn(2+)-binding residues include C66, C69, C76, H79, C106, C109, and C153. D493, D495, and D497 together coordinate Mg(2+). The segment at 838 to 850 is bridging helix; it reads PTEFLFHAISGRE.

It belongs to the RNA polymerase beta' chain family. In terms of assembly, component of the RNA polymerase III (Pol III) complex consisting of 17 subunits.

The protein resides in the nucleus. It catalyses the reaction RNA(n) + a ribonucleoside 5'-triphosphate = RNA(n+1) + diphosphate. DNA-dependent RNA polymerase catalyzes the transcription of DNA into RNA using the four ribonucleoside triphosphates as substrates. Largest and catalytic core component of RNA polymerase III which synthesizes small RNAs, such as 5S rRNA and tRNAs. Forms the polymerase active center together with the second largest subunit. A single-stranded DNA template strand of the promoter is positioned within the central active site cleft of Pol III. A bridging helix emanates from RPC1 and crosses the cleft near the catalytic site and is thought to promote translocation of Pol III by acting as a ratchet that moves the RNA-DNA hybrid through the active site by switching from straight to bent conformations at each step of nucleotide addition. This Schizosaccharomyces pombe (strain 972 / ATCC 24843) (Fission yeast) protein is DNA-directed RNA polymerase III subunit rpc1 (rpc1).